The chain runs to 355 residues: DNA polymerase IV (355 aa).

The UmuC domain occupies 14-198; it reads IIHVDMDAFF…LPVEKFHGVG (185 aa). Positions 18 and 116 each coordinate Mg(2+). The active site involves Glu117.

The protein belongs to the DNA polymerase type-Y family. As to quaternary structure, monomer. The cofactor is Mg(2+).

The protein resides in the cytoplasm. It catalyses the reaction DNA(n) + a 2'-deoxyribonucleoside 5'-triphosphate = DNA(n+1) + diphosphate. Functionally, poorly processive, error-prone DNA polymerase involved in untargeted mutagenesis. Copies undamaged DNA at stalled replication forks, which arise in vivo from mismatched or misaligned primer ends. These misaligned primers can be extended by PolIV. Exhibits no 3'-5' exonuclease (proofreading) activity. May be involved in translesional synthesis, in conjunction with the beta clamp from PolIII. The protein is DNA polymerase IV of Streptococcus suis (strain 98HAH33).